The chain runs to 343 residues: RNA-binding protein 43 (343 aa).

The RRM domain maps to 15–90; sequence RTVVVSGLPV…PRLTVSHFSE (76 aa).

In Mus musculus (Mouse), this protein is RNA-binding protein 43 (Rbm43).